Here is a 67-residue protein sequence, read N- to C-terminus: Large ribosomal subunit protein bL31 (67 aa).

The Zn(2+) site is built by Cys16, Cys18, Cys36, and Cys39.

Belongs to the bacterial ribosomal protein bL31 family. Type A subfamily. In terms of assembly, part of the 50S ribosomal subunit. Zn(2+) is required as a cofactor.

Functionally, binds the 23S rRNA. This Syntrophomonas wolfei subsp. wolfei (strain DSM 2245B / Goettingen) protein is Large ribosomal subunit protein bL31.